The following is a 214-amino-acid chain: Oxaloacetate tautomerase fahd-1, mitochondrial (214 aa).

Glutamate 65, glutamate 67, and aspartate 96 together coordinate Mg(2+).

This sequence belongs to the FAH family. Mg(2+) is required as a cofactor. It depends on Mn(2+) as a cofactor. Widely expressed.

Its subcellular location is the mitochondrion. It catalyses the reaction oxaloacetate = enol-oxaloacetate. Functionally, tautomerase that converts enol-oxaloacetate, a strong inhibitor of succinate dehydrogenase, to the physiological keto form of oxaloacetate. The polypeptide is Oxaloacetate tautomerase fahd-1, mitochondrial (Caenorhabditis elegans).